Consider the following 282-residue polypeptide: Putative phosphatase MPN_383 (282 aa).

Catalysis depends on aspartate 11, which acts as the Nucleophile. Aspartate 11 is a binding site for Mg(2+). Leucine 12 contacts phosphate. Aspartate 13 is a Mg(2+) binding site. Residues 45–46 (TG) and lysine 207 contribute to the phosphate site. Aspartate 230 contributes to the Mg(2+) binding site. Asparagine 233 is a binding site for phosphate.

The protein belongs to the HAD-like hydrolase superfamily. Cof family. Requires Mg(2+) as cofactor.

The sequence is that of Putative phosphatase MPN_383 from Mycoplasma pneumoniae (strain ATCC 29342 / M129 / Subtype 1) (Mycoplasmoides pneumoniae).